Reading from the N-terminus, the 423-residue chain is Growth hormone-releasing hormone receptor (423 aa).

The first 22 residues, 1–22 (MDGLMWATRILCLLSLCGVTLG), serve as a signal peptide directing secretion. Topologically, residues 23-130 (HLHLECDFIT…KEKSYFSTVK (108 aa)) are extracellular. 3 disulfide bridges follow: Cys-41/Cys-64, Cys-55/Cys-96, and Cys-78/Cys-112. Residues Asn-49 and Asn-50 are each glycosylated (N-linked (GlcNAc...) asparagine). A helical transmembrane segment spans residues 131–151 (IIYTTGHSISIVALCVAIAIL). At 152-167 (VALRRLHCPRNYIHTQ) the chain is on the cytoplasmic side. A helical transmembrane segment spans residues 168–188 (LFATFILKASAVFLKDAAIFQ). Topologically, residues 189 to 210 (GDSTDHCSMSTVLCKVSVAISH) are extracellular. Residues 211-231 (LATMTNFSWLLAEAVYLSCLL) form a helical membrane-spanning segment. The Cytoplasmic portion of the chain corresponds to 232 to 240 (ASTSPRSKP). A helical transmembrane segment spans residues 241 to 261 (AFWWLVLAGWGLPVLCTGTWV). The Extracellular segment spans residues 262–283 (GCKLAFEDTECWDLDNSSPCWW). The chain crosses the membrane as a helical span at residues 284 to 304 (IIKGPIVLSVGVNFGLFLNII). The Cytoplasmic portion of the chain corresponds to 305 to 331 (CILLRKLEPAQGGLHTRAQYWRLSKST). The helical transmembrane segment at 332 to 352 (LLLIPLFGIHYIIFNFLPDSA) threads the bilayer. Over 353–357 (GLDIR) the chain is Extracellular. The chain crosses the membrane as a helical span at residues 358–378 (VPLELGLGSFQGFIVAVLYCF). Residues 379 to 423 (LNQEVRTEISRKWYGHDPELLPARRTCTEWTTPPRSRLKVLTSEC) lie on the Cytoplasmic side of the membrane.

This sequence belongs to the G-protein coupled receptor 2 family. Pituitary gland.

The protein localises to the cell membrane. In terms of biological role, receptor for GRF, coupled to G proteins which activate adenylyl cyclase. Stimulates somatotroph cell growth, growth hormone gene transcription and growth hormone secretion. This chain is Growth hormone-releasing hormone receptor (Ghrhr), found in Mus musculus (Mouse).